The primary structure comprises 354 residues: Protein RecA (354 aa).

Position 67–74 (67–74 (GPESSGKT)) interacts with ATP.

It belongs to the RecA family.

The protein localises to the cytoplasm. Functionally, can catalyze the hydrolysis of ATP in the presence of single-stranded DNA, the ATP-dependent uptake of single-stranded DNA by duplex DNA, and the ATP-dependent hybridization of homologous single-stranded DNAs. It interacts with LexA causing its activation and leading to its autocatalytic cleavage. This chain is Protein RecA, found in Pasteurella multocida (strain Pm70).